A 308-amino-acid polypeptide reads, in one-letter code: tRNA pseudouridine synthase B (308 aa).

Aspartate 49 acts as the Nucleophile in catalysis.

Belongs to the pseudouridine synthase TruB family. Type 1 subfamily.

It carries out the reaction uridine(55) in tRNA = pseudouridine(55) in tRNA. Its function is as follows. Responsible for synthesis of pseudouridine from uracil-55 in the psi GC loop of transfer RNAs. The polypeptide is tRNA pseudouridine synthase B (Nitrosococcus oceani (strain ATCC 19707 / BCRC 17464 / JCM 30415 / NCIMB 11848 / C-107)).